The sequence spans 221 residues: MAFRDQPLGELALTIPRASALFRKYNLDFCCGGKQTLLRAATRQALDLDVIESELAALAETPLEKDWQAAPLAEIIEHILVRYHDRHREQLPELILQATKVERVHADKPGVPKGLAKYLSLLHEELTSHMMKEERVLFPMIKQGMGSQAAGPVSVMESEHDEAGELLEVIKHTTNNVTPPPEACTTWRALYNGINELIDDLMNHISLENNTLFPRALAGEK.

It belongs to the RIC family. YtfE subfamily. In terms of assembly, homodimer.

It is found in the cytoplasm. Its function is as follows. Di-iron-containing protein involved in the repair of iron-sulfur clusters damaged by oxidative and nitrosative stress conditions. This Cronobacter sakazakii (strain ATCC BAA-894) (Enterobacter sakazakii) protein is Iron-sulfur cluster repair protein YtfE.